The sequence spans 702 residues: Polyribonucleotide nucleotidyltransferase (702 aa).

D485 and D491 together coordinate Mg(2+). Residues 552–612 form the KH domain; the sequence is PRTEIICIDP…EGVKKAISII (61 aa). The S1 motif domain maps to 622–690; sequence GEIYLGKVTK…NQGRINLSRK (69 aa).

The protein belongs to the polyribonucleotide nucleotidyltransferase family. It depends on Mg(2+) as a cofactor.

It is found in the cytoplasm. It catalyses the reaction RNA(n+1) + phosphate = RNA(n) + a ribonucleoside 5'-diphosphate. Functionally, involved in mRNA degradation. Catalyzes the phosphorolysis of single-stranded polyribonucleotides processively in the 3'- to 5'-direction. The chain is Polyribonucleotide nucleotidyltransferase from Clostridium botulinum (strain Loch Maree / Type A3).